The sequence spans 86 residues: Omega-theraphotoxin-Hhn1b (86 aa).

Residues 1–21 (MKSIVFVALFGLALLAVVCSA) form the signal peptide. Positions 22 to 50 (SEDAHKELLKEVVRAMVVDKTDAVQAEER) are excised as a propeptide. 3 disulfides stabilise this stretch: Cys-52-Cys-66, Cys-59-Cys-71, and Cys-65-Cys-78.

It belongs to the neurotoxin 10 (Hwtx-1) family. 17 (Hntx-9) subfamily. As to expression, expressed by the venom gland.

Its subcellular location is the secreted. Ion channel inhibitor. The chain is Omega-theraphotoxin-Hhn1b from Cyriopagopus hainanus (Chinese bird spider).